We begin with the raw amino-acid sequence, 348 residues long: Haptoglobin-related protein (348 aa).

Positions Met-1–Phe-18 form a signal peptide, not cleaved. Positions Phe-34–Cys-87 constitute a Sushi domain. The Peptidase S1 domain maps to Ile-104 to Ala-346. 2 disulfide bridges follow: Cys-251-Cys-282 and Cys-293-Cys-323.

It belongs to the peptidase S1 family. In terms of tissue distribution, in adult liver the amount of HPR mRNA is at the lower limit of detection, therefore the extent of its expression is at most less than 1000-fold that of the HP1F gene. No HPR mRNA can be detected in fetal liver. Expressed in Hep-G2 and leukemia MOLT-4 cell lines.

It is found in the secreted. Its function is as follows. Primate-specific plasma protein associated with apolipoprotein L-I (apoL-I)-containing high-density lipoprotein (HDL). This HDL particle, termed trypanosome lytic factor-1 (TLF-1), mediates human innate immune protection against many species of African trypanosomes. Binds hemoglobin with high affinity and may contribute to the clearance of cell-free hemoglobin to allow hepatic recycling of heme iron. This chain is Haptoglobin-related protein (HPR), found in Homo sapiens (Human).